The sequence spans 879 residues: Putative ankyrin repeat protein L88 (879 aa).

ANK repeat units follow at residues 22–62 (KGFT…QKNK), 63–96 (KGYT…KTNI), 100–133 (EGIT…DINA), 137–170 (NGYT…NIDD), 174–207 (NGLT…DINA), 211–241 (NGRT…DIEA), 245–278 (KGLT…NIEA), 282–313 (KLRT…NIET), 317–347 (RNNT…NINH), 351–384 (EGCN…NINN), 387–420 (SERT…DPNI), 424–463 (NGNT…NPNF), 470–499 (NSLT…DINS), 506–542 (SALL…DVNI), 546–578 (NGNT…NPNT), 674–704 (SGIT…DPNI), and 708–738 (KGET…NPYI).

The chain is Putative ankyrin repeat protein L88 from Acanthamoeba polyphaga mimivirus (APMV).